Reading from the N-terminus, the 364-residue chain is MSEKTIVVLPGDHVGTEITNEAIKVLKAIEEVRPNVKFNFQHHLIGGAAIDATGVPLPDEALEAAKKADAVLLGAVGGPKWGTGAVRPEQGLLKIRKELNLYANLRPCNFASESLLELSPIKAEFAKGTDFTVVRELVGGIYFGERKEDDGSGVASDTETYSVPEVQRITRMAAFMALQHNPPLPIWSLDKANVLASSRLWRKTVTETIEKEFPQLTVQHQLIDSAAMILIKSPTTLNGIVITSNMFGDIISDEASVIPGSLGLLPSASLASLPDTNKAFGLYEPCHGSAPDLPANKVNPIATILSAAMMLKLSLDLFEEGVALEKAVKEVLDAGVRTGDLRGSNSTKEVGDAAVEAAKRILKN.

78–89 (GPKWGTGAVRPE) serves as a coordination point for NAD(+). Residues R96, R106, R135, and D224 each contribute to the substrate site. Mg(2+) contacts are provided by D224, D249, and D253. 288–299 (GSAPDLPANKVN) contacts NAD(+).

It belongs to the isocitrate and isopropylmalate dehydrogenases family. Homodimer. The cofactor is Mg(2+). Mn(2+) is required as a cofactor.

Its subcellular location is the cytoplasm. It catalyses the reaction (2R,3S)-3-isopropylmalate + NAD(+) = 4-methyl-2-oxopentanoate + CO2 + NADH. Its pathway is amino-acid biosynthesis; L-leucine biosynthesis; L-leucine from 3-methyl-2-oxobutanoate: step 3/4. Its function is as follows. Catalyzes the oxidation of 3-carboxy-2-hydroxy-4-methylpentanoate (3-isopropylmalate) to 3-carboxy-4-methyl-2-oxopentanoate. The product decarboxylates to 4-methyl-2 oxopentanoate. In Wickerhamomyces anomalus (strain ATCC 8168 / CBS 5759 / DSM 6766 / JCM 3585 / IAM 12210 / NCYC 432 / NBRC 10213 / NRRL Y-366 / AJ 5027) (Yeast), this protein is 3-isopropylmalate dehydrogenase (LEU2).